A 506-amino-acid polypeptide reads, in one-letter code: DNA nucleotidylexotransferase (506 aa).

A Nuclear localization signal motif is present at residues 11–17 (SQRKRQK). Residues 27 to 124 (GYEIKFNKLV…RPVDLEKKYH (98 aa)) form the BRCT domain. The tract at residues 258–262 (VGVKT) is involved in DNA binding. Residues 333–338 (GFRRGK) and 342–345 (HDID) each bind a 2'-deoxyribonucleoside 5'-triphosphate. Mg(2+)-binding residues include Asp343, Asp345, and Asp430. An a 2'-deoxyribonucleoside 5'-triphosphate-binding site is contributed by 445–446 (GW).

Belongs to the DNA polymerase type-X family. It depends on Mg(2+) as a cofactor.

It localises to the nucleus. It carries out the reaction DNA(n) + a 2'-deoxyribonucleoside 5'-triphosphate = DNA(n+1) + diphosphate. Functionally, template-independent DNA polymerase which catalyzes the random addition of deoxynucleoside 5'-triphosphate to the 3'-end of a DNA initiator. One of the in vivo functions of this enzyme is the addition of nucleotides at the junction (N region) of rearranged Ig heavy chain and T-cell receptor gene segments during the maturation of B- and T-cells. This is DNA nucleotidylexotransferase (DNTT) from Gallus gallus (Chicken).